Consider the following 195-residue polypeptide: ATP-dependent Clp protease proteolytic subunit 1 (195 aa).

Residue Ser-96 is the Nucleophile of the active site. The active site involves His-121.

This sequence belongs to the peptidase S14 family. Fourteen ClpP subunits assemble into 2 heptameric rings which stack back to back to give a disk-like structure with a central cavity, resembling the structure of eukaryotic proteasomes.

It localises to the cytoplasm. The enzyme catalyses Hydrolysis of proteins to small peptides in the presence of ATP and magnesium. alpha-casein is the usual test substrate. In the absence of ATP, only oligopeptides shorter than five residues are hydrolyzed (such as succinyl-Leu-Tyr-|-NHMec, and Leu-Tyr-Leu-|-Tyr-Trp, in which cleavage of the -Tyr-|-Leu- and -Tyr-|-Trp bonds also occurs).. In terms of biological role, cleaves peptides in various proteins in a process that requires ATP hydrolysis. Has a chymotrypsin-like activity. Plays a major role in the degradation of misfolded proteins. In Prochlorococcus marinus (strain MIT 9312), this protein is ATP-dependent Clp protease proteolytic subunit 1.